Reading from the N-terminus, the 346-residue chain is Sensor histidine kinase GraS (346 aa).

The next 2 membrane-spanning stretches (helical) occupy residues 15 to 35 and 43 to 63; these read MNWI…SLID and LFYI…LTYF. In terms of domain architecture, Histidine kinase spans 126-332; it reads EFVHDIKTPV…TVRLIFPLQN (207 aa).

Interacts with GraX.

The protein resides in the cell membrane. The catalysed reaction is ATP + protein L-histidine = ADP + protein N-phospho-L-histidine.. Its function is as follows. Member of the two-component regulatory system GraR/GraS involved in resistance against cationic antimicrobial peptides (CAMPs). Functions as a sensor protein kinase which phosphorylates GraR through the auxiliary protein GraX. In turn, GraR up-regulates many genes such as adhesins, exoproteins, transporters, toxins, and proteins involved in cell wall synthesis. Down-regulates the expression of many genes involved in RNA and amino acid synthesis or glycolysis. This Staphylococcus aureus (strain Mu50 / ATCC 700699) protein is Sensor histidine kinase GraS (graS).